Reading from the N-terminus, the 1591-residue chain is Rho guanine nucleotide exchange factor TIAM1 (1591 aa).

The disordered stretch occupies residues Met1–Glu70. Gly2 carries N-myristoyl glycine lipidation. A compositionally biased stretch (basic and acidic residues) spans Asn8–Ala19. A compositionally biased stretch (basic residues) spans Ser20–His49. A compositionally biased stretch (low complexity) spans Glu53–Ser67. Phosphoserine is present on residues Ser231, Ser356, and Ser358. 2 disordered regions span residues Gln305–Arg380 and Met393–Gln422. Polar residues predominate over residues Thr340 to Pro359. Low complexity predominate over residues Gly367–Gly376. A compositionally biased stretch (polar residues) spans Gln412–Gln422. Residues Val434–Ala549 enclose the PH 1 domain. Ser695 carries the post-translational modification Phosphoserine. Residues Thr765 to Leu832 form the RBD domain. Tyr829 carries the phosphotyrosine; by NTRK2 modification. The PDZ domain occupies Asn845–Ser908. The interval Gly933 to Gln1034 is disordered. Residues Leu958–Glu975 show a composition bias toward polar residues. Acidic residues predominate over residues Ala977 to Asp990. Over residues Pro1014 to Gln1028 the composition is skewed to low complexity. In terms of domain architecture, DH spans Lys1040 to Met1234. Positions Asp1261–Lys1397 constitute a PH 2 domain. Tyr1323 carries the post-translational modification Phosphotyrosine. Residues Lys1404 and Lys1420 each participate in a glycyl lysine isopeptide (Lys-Gly) (interchain with G-Cter in ubiquitin) cross-link. Positions Thr1456–Asp1481 are disordered. Residue Ser1519 is modified to Phosphoserine.

Belongs to the TIAM family. As to quaternary structure, component of the Par polarity complex, composed of at least phosphorylated PRKCZ, PARD3 and TIAM1. Interacts with BAIAP2. Interacts (via PDZ domain) with CNTNAP4, SDC1 and SDC3 (via C-terminus). Interacts with CD44, PARD3 and MAPK8IP2. Interacts with EPHA8; regulates clathrin-mediated endocytosis of EPHA8. Interacts with NTRK2; mediates the activation of RAC1 by BDNF. Ubiquitinated. Undergoes 'Lys-48' ubiquitination at Lys-1404 and Lys-1420 by a CUL3(KBTBD6/7) E3 ubiquitin ligase complex composed of CUL3, RBX1, KBTBD6 and KBTBD7. 'Lys-48' ubiquitination at Lys-1404 and Lys-1420 triggers proteasomal degradation. Ubiquitination at Lys-1404 and Lys-1420 by CUL3(KBTBD6/7) also requires the membrane-associated protein GABARAP and may therefore be spatially restricted within the cell. Highly expressed in brain and testis and at low or moderate levels in almost all other normal tissues. Found in virtually all analyzed tumor cell lines including B- and T-lymphomas, neuroblastomas, melanomas and carcinomas.

The protein localises to the cell junction. The protein resides in the cell membrane. In terms of biological role, guanyl-nucleotide exchange factor that activates RHO-like proteins and connects extracellular signals to cytoskeletal activities. Activates RAC1, CDC42, and to a lesser extent RHOA and their downstream signaling to regulate processes like cell adhesion and cell migration. This is Rho guanine nucleotide exchange factor TIAM1 from Mus musculus (Mouse).